We begin with the raw amino-acid sequence, 82 residues long: Ferredoxin (82 aa).

In terms of domain architecture, 4Fe-4S ferredoxin-type spans 3 to 31 (KYTIVDKDTCIACGACGAAAPDIYDYDDE). C12, C15, C18, and C62 together coordinate [4Fe-4S] cluster.

[4Fe-4S] cluster is required as a cofactor.

Functionally, ferredoxins are iron-sulfur proteins that transfer electrons in a wide variety of metabolic reactions. This ferredoxin may act as a phosphodonor to cytochrome P450 BioI. In Bacillus subtilis (strain 168), this protein is Ferredoxin (fer).